The following is a 717-amino-acid chain: Ubiquitin carboxyl-terminal hydrolase 11 (717 aa).

A disordered region spans residues 231 to 268 (ATAPPVHSLEVSSQIRDSSQDSSSSLSKVEKPKEEEGK). A compositionally biased stretch (low complexity) spans 242–257 (SSQIRDSSQDSSSSLS). Residues 258-268 (KVEKPKEEEGK) are compositionally biased toward basic and acidic residues. Residues 298 to 707 (TGLQNPCNTC…EVYVLFYERM (410 aa)) enclose the USP domain. The active-site Nucleophile is C307. Positions 531–577 (KKEEITSQKKKSTIFGFHSRSRSKSPHHHHHHHHSSDDSTKNAKKRN) are disordered. Residues 549–564 (SRSRSKSPHHHHHHHH) show a composition bias toward basic residues. Catalysis depends on H649, which acts as the Proton acceptor.

It belongs to the peptidase C19 family.

The enzyme catalyses Thiol-dependent hydrolysis of ester, thioester, amide, peptide and isopeptide bonds formed by the C-terminal Gly of ubiquitin (a 76-residue protein attached to proteins as an intracellular targeting signal).. The polypeptide is Ubiquitin carboxyl-terminal hydrolase 11 (UBP11) (Saccharomyces cerevisiae (strain ATCC 204508 / S288c) (Baker's yeast)).